We begin with the raw amino-acid sequence, 1152 residues long: Syntaxin-binding protein 5 (1152 aa).

The segment at 14–35 (TAGSSSASQQQQQQQHPPGNRE) is disordered. The span at 17-28 (SSSASQQQQQQQ) shows a compositional bias: low complexity. WD repeat units lie at residues 62 to 95 (SALA…CYCQ), 102 to 141 (VIQL…SLKF), 146 to 182 (VTFC…GYVI), 201 to 235 (HISD…DYRY), 241 to 273 (IHSV…PTKP), 295 to 337 (PILK…KSTA), 345 to 379 (IVDF…LIDL), 401 to 478 (TCCE…YKLK), 506 to 620 (QIIS…ELVI), and 634 to 696 (TSLA…SGAG). Disordered stretches follow at residues 557–596 (TPEG…GLRD) and 675–731 (SNDP…QKVN). Ser-693 is modified (phosphoserine). Residues 713–722 (SPTSGSSSPH) are compositionally biased toward low complexity. Ser-724 is subject to Phosphoserine; by PKA. Residue Ser-760 is modified to Phosphoserine. Position 763 is a phosphothreonine (Thr-763). Ser-783 is modified (phosphoserine). Thr-785 bears the Phosphothreonine mark. Ser-786 carries the phosphoserine modification. 4 WD repeats span residues 795–852 (ISAL…SGTI), 861–935 (RMAF…QNCA), 940–984 (ITET…LDVY), and 998–1021 (CFAN…TYSQ). The segment covering 879 to 893 (WTEHNVPEEKDEKEK) has biased composition (basic and acidic residues). The interval 879 to 907 (WTEHNVPEEKDEKEKLKKRRPVSVSPSSS) is disordered. A phosphoserine mark is found at Ser-901 and Ser-903. Thr-1040 carries the phosphothreonine modification. Phosphoserine occurs at positions 1059 and 1132. In terms of domain architecture, v-SNARE coiled-coil homology spans 1087–1147 (GIEGVKGAAS…HEMMLKYKDK (61 aa)).

It belongs to the WD repeat L(2)GL family. Part of a complex that contains STXBP5, STX4A and SNAP23. Interacts with STX1A and STX4A via its v-SNARE homology domain. Part of a complex that contains STX1, STXBP5, SNAP25 and SYT1. Post-translationally, phosphorylation by PKA reduces interaction with STX1A and enhances synaptic neurotransmitter release. Isoform 1 is detected in heart, brain, lung, liver, skeletal muscle, kidney and testis. Isoform 2 is detected in brain and in testis. Isoform 3 is detected in testis.

The protein localises to the cytoplasm. It is found in the cell membrane. The protein resides in the cytoplasmic vesicle membrane. Its subcellular location is the synapse. It localises to the cytoplasmic vesicle. The protein localises to the secretory vesicle. It is found in the synaptic vesicle. In terms of biological role, inhibits translocation of GLUT4 from intracellular vesicles to the plasma membrane. Plays a regulatory role in calcium-dependent exocytosis and neurotransmitter release. Inhibits membrane fusion between transport vesicles and the plasma membrane. May modulate the assembly of trans-SNARE complexes between transport vesicles and the plasma membrane. Competes with STXBP1 for STX1 binding. This chain is Syntaxin-binding protein 5 (Stxbp5), found in Rattus norvegicus (Rat).